A 493-amino-acid polypeptide reads, in one-letter code: Adenylyltransferase and sulfurtransferase uba4 (493 aa).

ATP-binding positions include Gly99, Asp120, 127–131 (SNLHR), Lys144, and 188–189 (DN). Zn(2+) is bound by residues Cys237 and Cys240. Cys254 functions as the Glycyl thioester intermediate; for adenylyltransferase activity in the catalytic mechanism. Residues Cys316 and Cys319 each coordinate Zn(2+). The Rhodanese domain occupies 376 to 491 (INKEPTIIDV…WREQIDPDWP (116 aa)). Cys446 serves as the catalytic Cysteine persulfide intermediate; for sulfurtransferase activity.

It in the N-terminal section; belongs to the HesA/MoeB/ThiF family. UBA4 subfamily. Zn(2+) is required as a cofactor.

The protein localises to the cytoplasm. It localises to the cytosol. The catalysed reaction is [molybdopterin-synthase sulfur-carrier protein]-C-terminal Gly-Gly + ATP + H(+) = [molybdopterin-synthase sulfur-carrier protein]-C-terminal Gly-Gly-AMP + diphosphate. It catalyses the reaction [molybdopterin-synthase sulfur-carrier protein]-C-terminal Gly-Gly-AMP + S-sulfanyl-L-cysteinyl-[cysteine desulfurase] + AH2 = [molybdopterin-synthase sulfur-carrier protein]-C-terminal-Gly-aminoethanethioate + L-cysteinyl-[cysteine desulfurase] + A + AMP + 2 H(+). Its pathway is tRNA modification; 5-methoxycarbonylmethyl-2-thiouridine-tRNA biosynthesis. The protein operates within cofactor biosynthesis; molybdopterin biosynthesis. Functionally, plays a central role in 2-thiolation of mcm(5)S(2)U at tRNA wobble positions of cytosolic tRNA(Lys), tRNA(Glu) and tRNA(Gln). Also essential during biosynthesis of the molybdenum cofactor. Acts by mediating the C-terminal thiocarboxylation of sulfur carriers urm1 and mocs2a. Its N-terminus first activates urm1 and mocs2a as acyl-adenylates (-COAMP), then the persulfide sulfur on the catalytic cysteine is transferred to urm1 and mocs2a to form thiocarboxylation (-COSH) of their C-terminus. The reaction probably involves hydrogen sulfide that is generated from the persulfide intermediate and that acts as a nucleophile towards urm1 and mocs2a. Subsequently, a transient disulfide bond is formed. Does not use thiosulfate as sulfur donor; nfs1 probably acting as a sulfur donor for thiocarboxylation reactions. The polypeptide is Adenylyltransferase and sulfurtransferase uba4 (Aspergillus fumigatus (strain CBS 144.89 / FGSC A1163 / CEA10) (Neosartorya fumigata)).